The chain runs to 575 residues: Manganese transporter SMF1 (575 aa).

Residues 1–70 (MVNVGPSHAA…TYVSKRQVMR (70 aa)) are Extracellular-facing. S24 carries the post-translational modification Phosphoserine. Residues K33 and K34 each participate in a glycyl lysine isopeptide (Lys-Gly) (interchain with G-Cter in ubiquitin) cross-link. A helical membrane pass occupies residues 71–91 (DIFAKYLKFIGPGLMVSVAYI). The Cytoplasmic segment spans residues 92–108 (DPGNYSTAVDAGASNQF). The helical transmembrane segment at 109–129 (SLLCIILLSNFIAIFLQCLCI) threads the bilayer. Residues 130–156 (KLGSVTGLDLSRACREYLPRWLNWTLY) lie on the Extracellular side of the membrane. The chain crosses the membrane as a helical span at residues 157–177 (FFAECAVIATDIAEVIGTAIA). The Cytoplasmic portion of the chain corresponds to 178-179 (LN). A helical membrane pass occupies residues 180–200 (ILIKVPLPAGVAITVVDVFLI). The Extracellular segment spans residues 201-218 (MFTYKPGASSIRFIRIFE). Residues 219–239 (CFVAVLVVGVCICFAIELAYI) traverse the membrane as a helical segment. The Cytoplasmic portion of the chain corresponds to 240 to 266 (PKSTSVKQVFRGFVPSAQMFDHNGIYT). Residues 267–287 (AISILGATVMPHSLFLGSALV) form a helical membrane-spanning segment. Residues 288–344 (QPRLLDYDVKHGNYTVSEEQDKVKKSKSTEEIMEEKYFNYRPTNAAIKYCMKYSMVE) are Extracellular-facing. A helical membrane pass occupies residues 345–365 (LSITLFTLALFVNCAILVVAG). Residues 366 to 396 (STLYNSPEADGADLFTIHELLSRNLAPAAGT) lie on the Cytoplasmic side of the membrane. Residues 397–417 (IFMLALLLSGQSAGVVCTMSG) traverse the membrane as a helical segment. Over 418–463 (QIVSEGHINWKLQPWQRRLATRCISIIPCLVISICIGREALSKALN) the chain is Extracellular. A helical membrane pass occupies residues 464–484 (ASQVVLSIVLPFLVAPLIFFT). Over 485–543 (CKKSIMKTEITVDHTEEDSHNHQNNNDRSAGSVIEQDGSSGMEIENGKDVKIVYMANNW) the chain is Cytoplasmic. Residues 498-517 (HTEEDSHNHQNNNDRSAGSV) form a disordered region. A helical transmembrane segment spans residues 544-564 (IITVIAIIVWLFLSLLNVYAI). The Extracellular segment spans residues 565–575 (VQLGMSHGDIS).

The protein belongs to the NRAMP family.

The protein resides in the cell membrane. It carries out the reaction Mn(2+)(in) = Mn(2+)(out). Functionally, high-affinity manganese transporter involved in manganese uptake from the extracellular environment. Also contributes to cellular accumulation of other divalent metal ions such as cadmium, cobalt, copper, iron and nickel. This is Manganese transporter SMF1 (SMF1) from Saccharomyces cerevisiae (strain ATCC 204508 / S288c) (Baker's yeast).